We begin with the raw amino-acid sequence, 321 residues long: Cytochrome c biogenesis protein CcsA (321 aa).

A run of 8 helical transmembrane segments spans residues 9 to 29, 44 to 64, 71 to 91, 98 to 118, 143 to 163, 225 to 245, 260 to 280, and 288 to 308; these read ILTHISFSIISIVITIHLMTL, GIISTFFSITGLLITRWIYSG, LYESLIFLSWSFSIIHMIPYL, LSVITVPSVIFTQGFVTSCLS, MLLSYATLLCGSLLSVALLVI, IISLGFIFLTMGILSGAVWAN, WAFITWTIFAIYSHIRININF, and VASIGFLIIWICYFGINLLGI.

Belongs to the CcmF/CycK/Ccl1/NrfE/CcsA family. May interact with Ccs1.

Its subcellular location is the plastid. The protein localises to the chloroplast thylakoid membrane. In terms of biological role, required during biogenesis of c-type cytochromes (cytochrome c6 and cytochrome f) at the step of heme attachment. The chain is Cytochrome c biogenesis protein CcsA from Dioscorea elephantipes (Elephant's foot yam).